Here is a 68-residue protein sequence, read N- to C-terminus: Large ribosomal subunit protein uL29 (68 aa).

It belongs to the universal ribosomal protein uL29 family.

The sequence is that of Large ribosomal subunit protein uL29 from Streptococcus uberis (strain ATCC BAA-854 / 0140J).